The primary structure comprises 496 residues: Transactivator/viroplasmin protein (496 aa).

The tract at residues 102–128 (RPNQGIQIPKKNEDHSSSSSKEEKGIQ) is disordered. Positions 111–128 (KKNEDHSSSSSKEEKGIQ) are enriched in basic and acidic residues.

The protein belongs to the caulimoviridae viroplasmin family.

Its subcellular location is the host cytoplasm. In terms of biological role, enhances the translation of downstream ORFs on polycistronic mRNAs derived from carnation etched ring virus. The chain is Transactivator/viroplasmin protein from Dianthus caryophyllus (Carnation).